We begin with the raw amino-acid sequence, 189 residues long: TATA-box-binding protein 1 (189 aa).

2 repeat units span residues 10–86 (IENV…FDKL) and 101–179 (VQNI…ISRL).

It belongs to the TBP family.

General factor that plays a role in the activation of archaeal genes transcribed by RNA polymerase. Binds specifically to the TATA box promoter element which lies close to the position of transcription initiation. The protein is TATA-box-binding protein 1 (tbp1) of Haloferax volcanii (strain ATCC 29605 / DSM 3757 / JCM 8879 / NBRC 14742 / NCIMB 2012 / VKM B-1768 / DS2) (Halobacterium volcanii).